The following is a 3133-amino-acid chain: Cysteine repeat modular protein A (3133 aa).

Positions 1 to 39 (MDSASTSMSRVHPSGVYRRPLLPSGGPRSTSERDERVDL) are disordered. Basic and acidic residues predominate over residues 30–39 (TSERDERVDL). The chain crosses the membrane as a helical span at residues 123-143 (LFLLFSSSPLLLLLLLHQFFI). Composition is skewed to basic and acidic residues over residues 173-211 (TFEE…DGKE) and 301-311 (NESEKAERARL). Disordered stretches follow at residues 173–234 (TFEE…EGRR) and 294–317 (VSPS…STPA). 3 N-linked (GlcNAc...) asparagine glycosylation sites follow: Asn-301, Asn-392, and Asn-470. The region spanning 577–644 (DETLEQGKLY…DPHVRFDFCD (68 aa)) is the Kringle domain. 2 disulfide bridges follow: Cys-599–Cys-631 and Cys-620–Cys-643. N-linked (GlcNAc...) asparagine glycans are attached at residues Asn-1364 and Asn-1532. 3 helical membrane-spanning segments follow: residues 2229–2249 (MVWN…FNIV), 2276–2296 (LTGI…PSWI), and 2339–2359 (VFYA…MSII). An N-linked (GlcNAc...) asparagine glycan is attached at Asn-2369. Helical transmembrane passes span 2420 to 2440 (AAKF…FVYS), 2489 to 2509 (VGIT…FLVL), and 2539 to 2559 (WEMV…VALI). N-linked (GlcNAc...) asparagine glycosylation is present at Asn-2565. The helical transmembrane segment at 2569–2589 (VWLAVVIAVIFLIIHLVTQPF) threads the bilayer. A glycan (N-linked (GlcNAc...) asparagine) is linked at Asn-2602. The next 2 membrane-spanning stretches (helical) occupy residues 2607-2627 (IWTI…SGSV) and 2632-2652 (LLFV…SLMF). Basic and acidic residues-rich tracts occupy residues 2827-2838 (FAAKDETPTAEE) and 3049-3069 (QEEN…DREI). 2 disordered regions span residues 2827–2847 (FAAK…DERL) and 3049–3101 (QEEN…LPEG). Residues 2955–3068 (SEALQKRNRK…KEEREEADRE (114 aa)) are a coiled coil. The segment covering 3083 to 3094 (GEDDTATIDDSS) has biased composition (acidic residues).

In terms of assembly, component of a complex, at least composed of cysteine repeat modular protein A (CRMPa), cysteine repeat modular protein B (CRMPb), micronemal protein 15 (MIC15) and thrombospondin type 1 domain-containing protein (TSP1).

The protein localises to the cell membrane. The protein resides in the endoplasmic reticulum. It is found in the golgi apparatus. Required for triggering rhoptry secretion. Plays a role in host cell invasion. This chain is Cysteine repeat modular protein A, found in Toxoplasma gondii.